We begin with the raw amino-acid sequence, 380 residues long: MKKKSVWIKADEGGWEEQKDRITTGLESGADCVLVNPGDVEKVRELGNITVAAFARDNKSRADIVVVGKRGEGDGTKPLPQEIPGSFDINAATLLMDKGVTVGGYVVIKDKHYEHFAAEMGKICDYLLVTGTDWKVIPLENLIADLQHQKVKIIFGVKSAEEARLAFQTLEAGADGVLLDSGNPQEIKDTIKAARELESESAELEAAVVTRVEPLGMGDRVCVDTCNLMQRGEGMLIGSQASGMFLVNSESDDSPYVAARPFRVNAGAVHSYIKIGEKTRYLSELRAGDPVTIVDSKGKQREGIVGRVKIESRPLMLIEAKARDRTLTAILQNAETIKLVGKDGTPISVAKLEKGDEVLVRLEEGARHFGKKIEETIIEK.

The protein belongs to the archaeal-type DHQ synthase family.

It catalyses the reaction 2-amino-2,3,7-trideoxy-D-lyxo-hept-6-ulosonate + NAD(+) + H2O = 3-dehydroquinate + NH4(+) + NADH + H(+). Catalyzes the oxidative deamination and cyclization of 2-amino-3,7-dideoxy-D-threo-hept-6-ulosonic acid (ADH) to yield 3-dehydroquinate (DHQ), which is fed into the canonical shikimic pathway of aromatic amino acid biosynthesis. This Methanosarcina acetivorans (strain ATCC 35395 / DSM 2834 / JCM 12185 / C2A) protein is 3-dehydroquinate synthase.